The primary structure comprises 78 residues: uncharacterized protein (78 aa).

The next 2 helical transmembrane spans lie at 20–40 (SVYFPPFFKAFAFGFVIWLVV) and 57–77 (LLMDLSLFAICVCLALAILIA).

It is found in the cell membrane. This is an uncharacterized protein from Escherichia coli (strain K12).